Reading from the N-terminus, the 212-residue chain is Adenylate kinase (212 aa).

10–15 (GAGKGT) contributes to the ATP binding site. Positions 30–59 (STGDMFRAAMANQTEMGRLAKSYIDKGELV) are NMP. Residues Thr-31, Arg-36, 57-59 (ELV), 86-89 (GYPR), and Gln-93 each bind AMP. The tract at residues 127–159 (GRIINRKTGETFHKVFNPPVDYKEEDYYQREDD) is LID. ATP is bound by residues Arg-128 and 137-138 (TF). The AMP site is built by Arg-156 and Arg-167. Gln-195 provides a ligand contact to ATP.

This sequence belongs to the adenylate kinase family. In terms of assembly, monomer.

It is found in the cytoplasm. It carries out the reaction AMP + ATP = 2 ADP. It functions in the pathway purine metabolism; AMP biosynthesis via salvage pathway; AMP from ADP: step 1/1. In terms of biological role, catalyzes the reversible transfer of the terminal phosphate group between ATP and AMP. Plays an important role in cellular energy homeostasis and in adenine nucleotide metabolism. The polypeptide is Adenylate kinase (Streptococcus pyogenes serotype M5 (strain Manfredo)).